Here is a 190-residue protein sequence, read N- to C-terminus: Adenylate kinase (190 aa).

An ATP-binding site is contributed by glycine 12 to threonine 17. The segment at serine 34–valine 63 is NMP. AMP-binding positions include threonine 35, arginine 40, asparagine 61–valine 63, glycine 88–arginine 91, and glutamine 95. The interval glycine 130 to aspartate 136 is LID. Arginine 131 provides a ligand contact to ATP. 2 residues coordinate AMP: arginine 133 and arginine 145. An ATP-binding site is contributed by arginine 173.

Belongs to the adenylate kinase family. Monomer.

Its subcellular location is the cytoplasm. The catalysed reaction is AMP + ATP = 2 ADP. The protein operates within purine metabolism; AMP biosynthesis via salvage pathway; AMP from ADP: step 1/1. In terms of biological role, catalyzes the reversible transfer of the terminal phosphate group between ATP and AMP. Plays an important role in cellular energy homeostasis and in adenine nucleotide metabolism. This chain is Adenylate kinase, found in Helicobacter hepaticus (strain ATCC 51449 / 3B1).